Here is a 275-residue protein sequence, read N- to C-terminus: Large ribosomal subunit protein uL2 (275 aa).

Residues 216–275 (GIRPQTRGSAMNPIDHPHGGGEGKTNSGRHPVTPWGMPTKGYKTRKKKASDKLIISKRKK) are disordered. Residues 257 to 275 (YKTRKKKASDKLIISKRKK) are compositionally biased toward basic residues.

The protein belongs to the universal ribosomal protein uL2 family. As to quaternary structure, part of the 50S ribosomal subunit. Forms a bridge to the 30S subunit in the 70S ribosome.

Its function is as follows. One of the primary rRNA binding proteins. Required for association of the 30S and 50S subunits to form the 70S ribosome, for tRNA binding and peptide bond formation. It has been suggested to have peptidyltransferase activity; this is somewhat controversial. Makes several contacts with the 16S rRNA in the 70S ribosome. The polypeptide is Large ribosomal subunit protein uL2 (Aliarcobacter butzleri (strain RM4018) (Arcobacter butzleri)).